A 541-amino-acid polypeptide reads, in one-letter code: 2-succinyl-5-enolpyruvyl-6-hydroxy-3-cyclohexene-1-carboxylate synthase (541 aa).

This sequence belongs to the TPP enzyme family. MenD subfamily. Homodimer. It depends on Mg(2+) as a cofactor. Mn(2+) serves as cofactor. Thiamine diphosphate is required as a cofactor.

The enzyme catalyses isochorismate + 2-oxoglutarate + H(+) = 5-enolpyruvoyl-6-hydroxy-2-succinyl-cyclohex-3-ene-1-carboxylate + CO2. It functions in the pathway quinol/quinone metabolism; 1,4-dihydroxy-2-naphthoate biosynthesis; 1,4-dihydroxy-2-naphthoate from chorismate: step 2/7. It participates in quinol/quinone metabolism; menaquinone biosynthesis. Its function is as follows. Catalyzes the thiamine diphosphate-dependent decarboxylation of 2-oxoglutarate and the subsequent addition of the resulting succinic semialdehyde-thiamine pyrophosphate anion to isochorismate to yield 2-succinyl-5-enolpyruvyl-6-hydroxy-3-cyclohexene-1-carboxylate (SEPHCHC). The sequence is that of 2-succinyl-5-enolpyruvyl-6-hydroxy-3-cyclohexene-1-carboxylate synthase from Rhodococcus opacus (strain B4).